The primary structure comprises 98 residues: Trp operon repressor homolog (98 aa).

A DNA-binding region spans residues 59-82 (QRQVSQMLGVGVATITRGSNELKA).

It belongs to the TrpR family. As to quaternary structure, homodimer.

Its subcellular location is the cytoplasm. This protein is an aporepressor. When complexed with L-tryptophan it binds the operator region of the trp operon and prevents the initiation of transcription. The sequence is that of Trp operon repressor homolog from Vibrio atlanticus (strain LGP32) (Vibrio splendidus (strain Mel32)).